The primary structure comprises 316 residues: Glutathione synthetase (316 aa).

In terms of domain architecture, ATP-grasp spans 125 to 310 (KLFTAWFSDL…ITGMLMDAIE (186 aa)). Residue 151-207 (WEKHSDIILKPLDGMGGASIFRVKEGDPNLGVIAETLTEHGTRYCMAQNYLPAIKDG) participates in ATP binding. 2 residues coordinate Mg(2+): Glu-281 and Asn-283.

The protein belongs to the prokaryotic GSH synthase family. As to quaternary structure, homotetramer. Requires Mg(2+) as cofactor. Mn(2+) serves as cofactor.

The enzyme catalyses gamma-L-glutamyl-L-cysteine + glycine + ATP = glutathione + ADP + phosphate + H(+). It participates in sulfur metabolism; glutathione biosynthesis; glutathione from L-cysteine and L-glutamate: step 2/2. Its activity is regulated as follows. Inhibited by 7,8-dihydrofolate, methotrexate and trimethoprim. The chain is Glutathione synthetase (gshB) from Escherichia coli (strain K12).